The following is a 301-amino-acid chain: Probable 5-dehydro-4-deoxyglucarate dehydratase (301 aa).

This sequence belongs to the DapA family.

It carries out the reaction 5-dehydro-4-deoxy-D-glucarate + H(+) = 2,5-dioxopentanoate + CO2 + H2O. It functions in the pathway carbohydrate acid metabolism; D-glucarate degradation; 2,5-dioxopentanoate from D-glucarate: step 2/2. This Cereibacter sphaeroides (strain ATCC 17029 / ATH 2.4.9) (Rhodobacter sphaeroides) protein is Probable 5-dehydro-4-deoxyglucarate dehydratase.